The primary structure comprises 132 residues: Small ribosomal subunit protein uS12 (132 aa).

At Asp89 the chain carries 3-methylthioaspartic acid. A disordered region spans residues Thr101 to Ala132. Residues Thr117 to Ala132 are compositionally biased toward basic residues.

The protein belongs to the universal ribosomal protein uS12 family. As to quaternary structure, part of the 30S ribosomal subunit. Contacts proteins S8 and S17. May interact with IF1 in the 30S initiation complex.

In terms of biological role, with S4 and S5 plays an important role in translational accuracy. Functionally, interacts with and stabilizes bases of the 16S rRNA that are involved in tRNA selection in the A site and with the mRNA backbone. Located at the interface of the 30S and 50S subunits, it traverses the body of the 30S subunit contacting proteins on the other side and probably holding the rRNA structure together. The combined cluster of proteins S8, S12 and S17 appears to hold together the shoulder and platform of the 30S subunit. This is Small ribosomal subunit protein uS12 from Sorangium cellulosum (strain So ce56) (Polyangium cellulosum (strain So ce56)).